Consider the following 199-residue polypeptide: Transgelin-2 (199 aa).

A2 is subject to N-acetylalanine. The residue at position 11 (S11) is a Phosphoserine. An N6-acetyllysine mark is found at K17 and K20. Residues 24-136 enclose the Calponin-homology (CH) domain; sequence ADLEQILIQW…RTLMNLGGLA (113 aa). S163 is modified (phosphoserine). Residue K171 forms a Glycyl lysine isopeptide (Lys-Gly) (interchain with G-Cter in SUMO2) linkage. One copy of the Calponin-like repeat lies at 174–199; it reads IGLQMGTNRGASQAGMTGYGMPRQIL. Phosphothreonine is present on T180. An omega-N-methylarginine mark is found at R182 and R196.

This sequence belongs to the calponin family. Expressed in epididymis (at protein level).

This Homo sapiens (Human) protein is Transgelin-2 (TAGLN2).